The following is a 434-amino-acid chain: 3-phosphoshikimate 1-carboxyvinyltransferase (434 aa).

3 residues coordinate 3-phosphoshikimate: Lys-22, Ser-23, and Arg-27. A phosphoenolpyruvate-binding site is contributed by Lys-22. Positions 93 and 121 each coordinate phosphoenolpyruvate. Ser-168, Ser-169, Gln-170, Ser-199, Asp-320, and Lys-347 together coordinate 3-phosphoshikimate. Residue Gln-170 coordinates phosphoenolpyruvate. Asp-320 (proton acceptor) is an active-site residue. Positions 351, 394, and 419 each coordinate phosphoenolpyruvate.

Belongs to the EPSP synthase family. In terms of assembly, monomer.

It is found in the cytoplasm. It carries out the reaction 3-phosphoshikimate + phosphoenolpyruvate = 5-O-(1-carboxyvinyl)-3-phosphoshikimate + phosphate. Its pathway is metabolic intermediate biosynthesis; chorismate biosynthesis; chorismate from D-erythrose 4-phosphate and phosphoenolpyruvate: step 6/7. In terms of biological role, catalyzes the transfer of the enolpyruvyl moiety of phosphoenolpyruvate (PEP) to the 5-hydroxyl of shikimate-3-phosphate (S3P) to produce enolpyruvyl shikimate-3-phosphate and inorganic phosphate. The protein is 3-phosphoshikimate 1-carboxyvinyltransferase of Burkholderia cenocepacia (strain ATCC BAA-245 / DSM 16553 / LMG 16656 / NCTC 13227 / J2315 / CF5610) (Burkholderia cepacia (strain J2315)).